The primary structure comprises 102 residues: Monothiol glutaredoxin-S1 (102 aa).

The Glutaredoxin domain maps to 1 to 101 (MEKISNLLED…SLLRRAGAIW (101 aa)). Residue cysteine 21 coordinates [2Fe-2S] cluster.

This sequence belongs to the glutaredoxin family. CC-type subfamily.

Its subcellular location is the cytoplasm. May only reduce GSH-thiol disulfides, but not protein disulfides. The sequence is that of Monothiol glutaredoxin-S1 (GRXS1) from Arabidopsis thaliana (Mouse-ear cress).